Consider the following 309-residue polypeptide: Beta-lactamase (309 aa).

Residues 1–28 form the signal peptide; sequence MMILKNKRMLKIGICVGILGLSITSLEA. S92 acts as the Acyl-ester intermediate in catalysis. Catalysis depends on E188, which acts as the Proton acceptor. A substrate-binding site is contributed by 254–256; that stretch reads KSG.

Belongs to the class-A beta-lactamase family.

The catalysed reaction is a beta-lactam + H2O = a substituted beta-amino acid. Functionally, this protein is a beta-lactamase with a substrate specificity for penicillins. In Bacillus thuringiensis, this protein is Beta-lactamase (bla).